The following is a 283-amino-acid chain: Acetyl-coenzyme A carboxylase carboxyl transferase subunit beta (283 aa).

Residues 29–283 (LWISCPKCQQ…VKIHSMKGAF (255 aa)) form the CoA carboxyltransferase N-terminal domain. Zn(2+) is bound by residues C33, C36, C51, and C54. The segment at 33–54 (CPKCQQSIYHKDLGKYKTCPNC) adopts a C4-type zinc-finger fold.

It belongs to the AccD/PCCB family. As to quaternary structure, acetyl-CoA carboxylase is a heterohexamer composed of biotin carboxyl carrier protein (AccB), biotin carboxylase (AccC) and two subunits each of ACCase subunit alpha (AccA) and ACCase subunit beta (AccD). Requires Zn(2+) as cofactor.

It localises to the cytoplasm. The enzyme catalyses N(6)-carboxybiotinyl-L-lysyl-[protein] + acetyl-CoA = N(6)-biotinyl-L-lysyl-[protein] + malonyl-CoA. Its pathway is lipid metabolism; malonyl-CoA biosynthesis; malonyl-CoA from acetyl-CoA: step 1/1. Component of the acetyl coenzyme A carboxylase (ACC) complex. Biotin carboxylase (BC) catalyzes the carboxylation of biotin on its carrier protein (BCCP) and then the CO(2) group is transferred by the transcarboxylase to acetyl-CoA to form malonyl-CoA. The sequence is that of Acetyl-coenzyme A carboxylase carboxyl transferase subunit beta from Ligilactobacillus salivarius (strain UCC118) (Lactobacillus salivarius).